Here is a 102-residue protein sequence, read N- to C-terminus: Transposable element activator uncharacterized 12 kDa protein (102 aa).

Residues 24–51 (HNHNQNHNHSHNLNPKKKHHRRGQRSAH) show a composition bias toward basic residues. Residues 24–55 (HNHNQNHNHSHNLNPKKKHHRRGQRSAHRMYG) are disordered.

This chain is Transposable element activator uncharacterized 12 kDa protein, found in Zea mays (Maize).